A 499-amino-acid polypeptide reads, in one-letter code: Probable alpha-L-arabinofuranosidase B (499 aa).

The N-terminal stretch at 1 to 18 (MFSRRNLVALGLAATVSA) is a signal peptide. The segment at 19–335 (GPCDIYEAGD…ENIVAAKYVS (317 aa)) is catalytic. Intrachain disulfides connect cysteine 21/cysteine 31, cysteine 81/cysteine 86, and cysteine 176/cysteine 177. A glycan (N-linked (GlcNAc...) asparagine) is linked at asparagine 83. Asparagine 202 is a glycosylation site (N-linked (GlcNAc...) asparagine). Aspartate 219 contributes to the substrate binding site. Catalysis depends on glutamate 221, which acts as the Nucleophile. Asparagine 222, asparagine 223, and glycine 296 together coordinate substrate. Aspartate 297 acts as the Proton donor in catalysis. Positions 336–499 (GSLVSGPSFT…SFEIETAFAS (164 aa)) are ABD. Cysteine 401 and cysteine 439 are oxidised to a cystine. Substrate-binding residues include histidine 416, asparagine 418, phenylalanine 419, aspartate 435, histidine 463, aspartate 465, leucine 468, and aspartate 488.

This sequence belongs to the glycosyl hydrolase 54 family.

The protein resides in the secreted. It carries out the reaction Hydrolysis of terminal non-reducing alpha-L-arabinofuranoside residues in alpha-L-arabinosides.. The protein operates within glycan metabolism; L-arabinan degradation. In terms of biological role, alpha-L-arabinofuranosidase involved in the degradation of arabinoxylan, a major component of plant hemicellulose. Able to hydrolyze 1,5-, 1,3- and 1,2-alpha-linkages not only in L-arabinofuranosyl oligosaccharides, but also in polysaccharides containing terminal non-reducing L-arabinofuranoses in side chains, like L-arabinan, arabinogalactan and arabinoxylan. This Aspergillus niger (strain ATCC MYA-4892 / CBS 513.88 / FGSC A1513) protein is Probable alpha-L-arabinofuranosidase B (abfB).